Reading from the N-terminus, the 260-residue chain is Ras-related protein Rab-32B (260 aa).

The disordered stretch occupies residues 11-50; the sequence is FDTDPDVSTDSNYNNNNNSNNNNSIISNSNNNNNNNNNNV. A compositionally biased stretch (low complexity) spans 21–49; that stretch reads SNYNNNNNSNNNNSIISNSNNNNNNNNNN. A GTP-binding site is contributed by 66-73; sequence GDYAVGKS. The Effector region motif lies at 88 to 96; it reads YKLTIGVDF. GTP contacts are provided by residues 115 to 119 and 177 to 180; these read DIAGH and NKSD. Positions 231-260 are disordered; sequence TNHPPKPEEDTLELTKTNGEKSDDSKSCCK. A compositionally biased stretch (basic and acidic residues) spans 248–260; the sequence is NGEKSDDSKSCCK. Residues C258 and C259 are each lipidated (S-geranylgeranyl cysteine).

Belongs to the small GTPase superfamily. Rab family.

This chain is Ras-related protein Rab-32B (rab32B), found in Dictyostelium discoideum (Social amoeba).